An 865-amino-acid chain; its full sequence is Alanine--tRNA ligase (865 aa).

Zn(2+)-binding residues include histidine 554, histidine 558, cysteine 656, and histidine 660.

Belongs to the class-II aminoacyl-tRNA synthetase family. Requires Zn(2+) as cofactor.

Its subcellular location is the cytoplasm. It catalyses the reaction tRNA(Ala) + L-alanine + ATP = L-alanyl-tRNA(Ala) + AMP + diphosphate. Its function is as follows. Catalyzes the attachment of alanine to tRNA(Ala) in a two-step reaction: alanine is first activated by ATP to form Ala-AMP and then transferred to the acceptor end of tRNA(Ala). Also edits incorrectly charged Ser-tRNA(Ala) and Gly-tRNA(Ala) via its editing domain. This Idiomarina loihiensis (strain ATCC BAA-735 / DSM 15497 / L2-TR) protein is Alanine--tRNA ligase.